The following is a 784-amino-acid chain: Kinesin-like protein Klp68D (784 aa).

One can recognise a Kinesin motor domain in the interval 19 to 344 (CVQVVVRCRP…LRYASRAKSI (326 aa)). 106–113 (GQTGTGKT) contacts ATP. Positions 351-385 (NEDPQDAKLKEYQEEIERLKRLIGPQQQQRSEKQV) form a coiled coil. Disordered stretches follow at residues 371–449 (RLIG…ERER), 605–652 (KFSS…PSSL), and 742–784 (IKSS…LVNK). Basic residues predominate over residues 386-396 (TAKKQRVKKPK). The span at 416-428 (PVEDDSDPEGAES) shows a compositional bias: acidic residues. The stretch at 426-582 (AESESDKENE…KRQLLIIDNF (157 aa)) forms a coiled coil. Over residues 429–449 (ESDKENEAEVAKSNEELERER) the composition is skewed to basic and acidic residues. A compositionally biased stretch (basic residues) spans 622-634 (SSKRPVSHPQRRR). The span at 769–778 (KKPASAYPKA) shows a compositional bias: low complexity.

It belongs to the TRAFAC class myosin-kinesin ATPase superfamily. Kinesin family. Kinesin II subfamily. In terms of tissue distribution, expressed primarily in the central nervous system and in a subset of the peripheral nervous system during embryogenesis.

It localises to the cytoplasm. It is found in the cytoskeleton. Plus-end directed microtubule motor that may be used for anterograde axonal transport and could conceivably move cargos in fly neurons different than those moved by kinesin heavy chain or other plus-end directed motors. The protein is Kinesin-like protein Klp68D (Klp68D) of Drosophila melanogaster (Fruit fly).